Reading from the N-terminus, the 744-residue chain is Putative pre-mRNA-splicing factor ATP-dependent RNA helicase DHX32 (744 aa).

An N-acetylmethionine modification is found at Met-1. The disordered stretch occupies residues 1-28 (MDEEELDHPNASPEKRYFPESLDSSDGD). Residues 72–270 (MESLLQNQVV…RLIFEIHRSG (199 aa)) enclose the Helicase ATP-binding domain. An ATP-binding site is contributed by 85–92 (GDSKCGKS). A DEAH box motif is present at residues 185 to 188 (DDVH). One can recognise a Helicase C-terminal domain in the interval 258–438 (SVIRLIFEIH…SMVLFMKRVD (181 aa)).

Belongs to the DEAD box helicase family. DEAH subfamily.

It is found in the nucleus. The protein localises to the mitochondrion. The enzyme catalyses ATP + H2O = ADP + phosphate + H(+). The protein is Putative pre-mRNA-splicing factor ATP-dependent RNA helicase DHX32 (Dhx32) of Mus musculus (Mouse).